We begin with the raw amino-acid sequence, 116 residues long: MKLCVLTIASLLVTVTSLETQKEIAEGSELTREETPSLVEHKEDEAAAASEKRSCIEEWKTCEHSCECCGSSTICSSTWAEGKEIKLCKNEGGTFKKVLHFIQKGISKLKSCKEGN.

The N-terminal stretch at 1–17 (MKLCVLTIASLLVTVTS) is a signal peptide. A propeptide spanning residues 18–53 (LETQKEIAEGSELTREETPSLVEHKEDEAAAASEKR) is cleaved from the precursor. Residues 24–46 (IAEGSELTREETPSLVEHKEDEA) form a disordered region. Disulfide bonds link Cys55–Cys69, Cys62–Cys75, Cys66–Cys112, and Cys68–Cys88.

This sequence belongs to the neurotoxin 03 (Tx2) family. 02 subfamily. HNTX-XV sub-subfamily. Expressed by the venom gland.

It localises to the secreted. Probable ion channel inhibitor. The protein is U30-theraphotoxin-Cg1a of Chilobrachys guangxiensis (Chinese earth tiger tarantula).